Here is a 251-residue protein sequence, read N- to C-terminus: Proteasome subunit alpha type-7 (251 aa).

The protein belongs to the peptidase T1A family. The 26S proteasome consists of a 20S proteasome core and two 19S regulatory subunits. The 20S proteasome core is composed of 28 subunits that are arranged in four stacked rings, resulting in a barrel-shaped structure. The two end rings are each formed by seven alpha subunits, and the two central rings are each formed by seven beta subunits. The catalytic chamber with the active sites is on the inside of the barrel.

It is found in the cytoplasm. It localises to the nucleus. The proteasome is a multicatalytic proteinase complex which is characterized by its ability to cleave peptides with Arg, Phe, Tyr, Leu, and Glu adjacent to the leaving group at neutral or slightly basic pH. The proteasome has an ATP-dependent proteolytic activity. The chain is Proteasome subunit alpha type-7 (psma7) from Carassius auratus (Goldfish).